An 836-amino-acid chain; its full sequence is Outer membrane usher protein PapC (836 aa).

An N-terminal signal peptide occupies residues 1–24 (MKDRIPFAVNNITCVILLSLFCNA). Cys-814 and Cys-832 are joined by a disulfide.

The protein belongs to the fimbrial export usher family.

Its subcellular location is the cell outer membrane. Its function is as follows. Involved in the export and assembly of pili subunits across the outer membrane. Forms a hexameric ring-shaped pore in the outer bacterial membrane. The 2 nanometer-diameter pore allows the passage of the thin tip fibrillum. As for the rod, it probably unwinds into linear fibers which would therefore be narrow enough to pass through the pore. This chain is Outer membrane usher protein PapC (papC), found in Escherichia coli.